Consider the following 454-residue polypeptide: 3-phosphoshikimate 1-carboxyvinyltransferase (454 aa).

Residues 1 to 31 (MSENHSEGASRPVISRRPAAGLRADHPVHVP) are disordered. 3 residues coordinate 3-phosphoshikimate: lysine 34, serine 35, and arginine 39. Lysine 34 contributes to the phosphoenolpyruvate binding site. Glycine 107 and arginine 135 together coordinate phosphoenolpyruvate. Serine 180, glutamine 182, aspartate 334, and lysine 361 together coordinate 3-phosphoshikimate. Residue glutamine 182 coordinates phosphoenolpyruvate. The Proton acceptor role is filled by aspartate 334. Phosphoenolpyruvate is bound by residues arginine 365 and arginine 409.

It belongs to the EPSP synthase family. As to quaternary structure, monomer.

The protein localises to the cytoplasm. It carries out the reaction 3-phosphoshikimate + phosphoenolpyruvate = 5-O-(1-carboxyvinyl)-3-phosphoshikimate + phosphate. It functions in the pathway metabolic intermediate biosynthesis; chorismate biosynthesis; chorismate from D-erythrose 4-phosphate and phosphoenolpyruvate: step 6/7. Catalyzes the transfer of the enolpyruvyl moiety of phosphoenolpyruvate (PEP) to the 5-hydroxyl of shikimate-3-phosphate (S3P) to produce enolpyruvyl shikimate-3-phosphate and inorganic phosphate. In Granulibacter bethesdensis (strain ATCC BAA-1260 / CGDNIH1), this protein is 3-phosphoshikimate 1-carboxyvinyltransferase.